The following is a 147-amino-acid chain: Myoglobin (147 aa).

Positions 2–141 constitute a Globin domain; it reads HDAELVLKCW…VIGDIDTYYK (140 aa). Residue His60 participates in nitrite binding. His60 is an O2 binding site. His89 is a heme b binding site.

Belongs to the globin family. Monomeric.

The protein localises to the cytoplasm. It is found in the sarcoplasm. The enzyme catalyses Fe(III)-heme b-[protein] + nitric oxide + H2O = Fe(II)-heme b-[protein] + nitrite + 2 H(+). The catalysed reaction is H2O2 + AH2 = A + 2 H2O. Its function is as follows. Monomeric heme protein which primary function is to store oxygen and facilitate its diffusion within muscle tissues. Reversibly binds oxygen through a pentacoordinated heme iron and enables its timely and efficient release as needed during periods of heightened demand. Depending on the oxidative conditions of tissues and cells, and in addition to its ability to bind oxygen, it also has a nitrite reductase activity whereby it regulates the production of bioactive nitric oxide. Under stress conditions, like hypoxia and anoxia, it also protects cells against reactive oxygen species thanks to its pseudoperoxidase activity. In Cyprinus carpio (Common carp), this protein is Myoglobin (mb).